Consider the following 286-residue polypeptide: Thiazole synthase (286 aa).

Residue lysine 122 is the Schiff-base intermediate with DXP of the active site. 1-deoxy-D-xylulose 5-phosphate-binding positions include glycine 183, 209 to 210, and 231 to 232; these read AG and NT.

This sequence belongs to the ThiG family. In terms of assembly, homotetramer. Forms heterodimers with either ThiH or ThiS.

Its subcellular location is the cytoplasm. It carries out the reaction [ThiS sulfur-carrier protein]-C-terminal-Gly-aminoethanethioate + 2-iminoacetate + 1-deoxy-D-xylulose 5-phosphate = [ThiS sulfur-carrier protein]-C-terminal Gly-Gly + 2-[(2R,5Z)-2-carboxy-4-methylthiazol-5(2H)-ylidene]ethyl phosphate + 2 H2O + H(+). It functions in the pathway cofactor biosynthesis; thiamine diphosphate biosynthesis. Catalyzes the rearrangement of 1-deoxy-D-xylulose 5-phosphate (DXP) to produce the thiazole phosphate moiety of thiamine. Sulfur is provided by the thiocarboxylate moiety of the carrier protein ThiS. In vitro, sulfur can be provided by H(2)S. The sequence is that of Thiazole synthase from Synechococcus elongatus (strain ATCC 33912 / PCC 7942 / FACHB-805) (Anacystis nidulans R2).